A 100-amino-acid polypeptide reads, in one-letter code: Large ribosomal subunit protein uL23 (100 aa).

This sequence belongs to the universal ribosomal protein uL23 family. In terms of assembly, part of the 50S ribosomal subunit. Contacts protein L29, and trigger factor when it is bound to the ribosome.

Functionally, one of the early assembly proteins it binds 23S rRNA. One of the proteins that surrounds the polypeptide exit tunnel on the outside of the ribosome. Forms the main docking site for trigger factor binding to the ribosome. In Shewanella amazonensis (strain ATCC BAA-1098 / SB2B), this protein is Large ribosomal subunit protein uL23.